A 398-amino-acid polypeptide reads, in one-letter code: Candidapepsin-2 (398 aa).

A signal peptide spans Met1–Ala18. Positions Thr19–Arg56 are cleaved as a propeptide — activation peptide. A Peptidase A1 domain is found at Tyr70 to Ala384. Asp88 is an active-site residue. Residue Asp88–Gly90 coordinates pepstatin A. Cys103 and Cys115 are joined by a disulfide. Pepstatin A-binding positions include Gly141 to Asp142 and Asp274 to Thr278. Residue Asp274 is part of the active site. A disulfide bond links Cys312 and Cys350. Residues Asn313 and Asn321 are each glycosylated (N-linked (GlcNAc...) asparagine).

It belongs to the peptidase A1 family. As to quaternary structure, monomer. Post-translationally, O-glycosylated.

The protein localises to the secreted. The enzyme catalyses Preferential cleavage at the carboxyl of hydrophobic amino acids, but fails to cleave 15-Leu-|-Tyr-16, 16-Tyr-|-Leu-17 and 24-Phe-|-Phe-25 of insulin B chain. Activates trypsinogen, and degrades keratin.. The sequence is that of Candidapepsin-2 (SAP2) from Candida albicans (strain WO-1) (Yeast).